The chain runs to 202 residues: S-modulin (202 aa).

Residue Gly-2 is the site of N-myristoyl glycine attachment. EF-hand domains follow at residues Gln-25–Ala-60, Asp-61–Gly-96, Lys-97–Met-132, and Thr-147–Ile-182. Asp-74, Asn-76, Asp-78, Thr-80, Glu-85, Asp-110, Asp-112, Asn-114, Thr-116, and Glu-121 together coordinate Ca(2+).

The protein belongs to the recoverin family. Post-translationally, the N-terminus is blocked.

Functionally, calcium-dependent regulator of light sensitivity of cGMP phosphodiesterase in rod outer segments. Controls rhodopsin phosphorylation in a Ca(2+)-dependent manner. This Aquarana catesbeiana (American bullfrog) protein is S-modulin.